We begin with the raw amino-acid sequence, 429 residues long: UDP-glucuronate 4-epimerase 1 (429 aa).

A run of 2 helical transmembrane segments spans residues 36–56 (FLWA…QSFV) and 87–107 (GISV…SLAL). Residue 89 to 120 (SVLVTGATGFVGSHVSLALRKRGDGVVGLDNF) coordinates NAD(+). Tyrosine 239 serves as the catalytic Proton acceptor.

This sequence belongs to the NAD(P)-dependent epimerase/dehydratase family. In terms of assembly, homodimer. In terms of tissue distribution, in root stele, leaves, siliques, flowers, pollen and stems.

It is found in the golgi apparatus. The protein resides in the golgi stack membrane. It catalyses the reaction UDP-alpha-D-glucuronate = UDP-alpha-D-galacturonate. Inhibited by UDP-Xylose. UDP-D-glucuronate 4-epimerase involved in the synthesis of the negatively charged monosaccharide that forms the backbone of pectic cell wall components. This Arabidopsis thaliana (Mouse-ear cress) protein is UDP-glucuronate 4-epimerase 1 (GAE1).